The chain runs to 94 residues: Small ubiquitin-related modifier 3 (94 aa).

Lysine 11 participates in a covalent cross-link: Glycyl lysine isopeptide (Lys-Gly) (interchain with G-Cter in SUMO). Residues 15 to 92 (DHINLKVAGQ…IDVFQQQTGG (78 aa)) form the Ubiquitin-like domain. Glycine 92 is covalently cross-linked (Glycyl lysine isopeptide (Gly-Lys) (interchain with K-? in acceptor proteins)). Positions 93 to 94 (SC) are excised as a propeptide.

This sequence belongs to the ubiquitin family. SUMO subfamily. Interacts with sae2 and ube2i. Covalently attached to a number of proteins. In terms of processing, polymeric chains can be formed through Lys-11 cross-linking. Cleavage of precursor form by a sentrin-specific protease is necessary for function.

It is found in the cytoplasm. It localises to the nucleus. The protein resides in the PML body. In terms of biological role, ubiquitin-like protein which can be covalently attached to target lysines either as a monomer or as a lysine-linked polymer. Does not seem to be involved in protein degradation and may function as an antagonist of ubiquitin in the degradation process. Plays a role in a number of cellular processes such as nuclear transport, DNA replication and repair, mitosis and signal transduction. Covalent attachment to its substrates requires prior activation by the E1 complex sae1-sae2 and linkage to the E2 enzyme ube2i. This chain is Small ubiquitin-related modifier 3 (sumo3), found in Danio rerio (Zebrafish).